Consider the following 480-residue polypeptide: Aspartyl/glutamyl-tRNA(Asn/Gln) amidotransferase subunit B (480 aa).

The protein belongs to the GatB/GatE family. GatB subfamily. In terms of assembly, heterotrimer of A, B and C subunits.

It carries out the reaction L-glutamyl-tRNA(Gln) + L-glutamine + ATP + H2O = L-glutaminyl-tRNA(Gln) + L-glutamate + ADP + phosphate + H(+). The enzyme catalyses L-aspartyl-tRNA(Asn) + L-glutamine + ATP + H2O = L-asparaginyl-tRNA(Asn) + L-glutamate + ADP + phosphate + 2 H(+). In terms of biological role, allows the formation of correctly charged Asn-tRNA(Asn) or Gln-tRNA(Gln) through the transamidation of misacylated Asp-tRNA(Asn) or Glu-tRNA(Gln) in organisms which lack either or both of asparaginyl-tRNA or glutaminyl-tRNA synthetases. The reaction takes place in the presence of glutamine and ATP through an activated phospho-Asp-tRNA(Asn) or phospho-Glu-tRNA(Gln). The polypeptide is Aspartyl/glutamyl-tRNA(Asn/Gln) amidotransferase subunit B (Streptococcus pneumoniae serotype 4 (strain ATCC BAA-334 / TIGR4)).